The primary structure comprises 347 residues: Anthranilate phosphoribosyltransferase (347 aa).

Residues Gly88, 91 to 92 (GD), Thr96, 98 to 101 (NIST), 116 to 124 (KHGNRAASS), and Ser128 contribute to the 5-phospho-alpha-D-ribose 1-diphosphate site. Gly88 provides a ligand contact to anthranilate. Ser100 serves as a coordination point for Mg(2+). Asn119 is a binding site for anthranilate. Arg174 contacts anthranilate. 2 residues coordinate Mg(2+): Asp233 and Glu234.

The protein belongs to the anthranilate phosphoribosyltransferase family. As to quaternary structure, homodimer. Mg(2+) is required as a cofactor.

It carries out the reaction N-(5-phospho-beta-D-ribosyl)anthranilate + diphosphate = 5-phospho-alpha-D-ribose 1-diphosphate + anthranilate. It functions in the pathway amino-acid biosynthesis; L-tryptophan biosynthesis; L-tryptophan from chorismate: step 2/5. Functionally, catalyzes the transfer of the phosphoribosyl group of 5-phosphorylribose-1-pyrophosphate (PRPP) to anthranilate to yield N-(5'-phosphoribosyl)-anthranilate (PRA). The sequence is that of Anthranilate phosphoribosyltransferase from Rhodospirillum rubrum (strain ATCC 11170 / ATH 1.1.1 / DSM 467 / LMG 4362 / NCIMB 8255 / S1).